Reading from the N-terminus, the 286-residue chain is Aquaporin PIP1-1 (286 aa).

The disordered stretch occupies residues 1-34; that stretch reads MEGKEEDVRLGANKFSERQPIGTAAQSDKGYKEP. The Cytoplasmic portion of the chain corresponds to 1–54; sequence MEGKEEDVRLGANKFSERQPIGTAAQSDKGYKEPPPAPLFEPGELTSWSFYRAG. A helical membrane pass occupies residues 55–75; that stretch reads IAEFMATFLFLYITILTVMGV. At 76 to 88 the chain is on the extracellular side; the sequence is VKSNSKCSTVGIQ. A helical membrane pass occupies residues 89 to 109; sequence GIAWAFGGMIFALVYCTAGIS. The Cytoplasmic portion of the chain corresponds to 110–131; that stretch reads GGHINPAVTFGLFLARKLSLTR. An NPA 1 motif is present at residues 114 to 116; the sequence is NPA. Residues 132–152 traverse the membrane as a helical segment; sequence ALFYMVMQCLGAICGAGVVKG. Topologically, residues 153–174 are extracellular; that stretch reads YQKGLYESNGGGANVVAPGYTK. The helical transmembrane segment at 175 to 195 threads the bilayer; that stretch reads GDGLGAEIVGTFILVYTVFSA. The Cytoplasmic segment spans residues 196–208; it reads TDAKRNARDSHVP. A helical membrane pass occupies residues 209–229; sequence ILAPLPIGFAVFLVHLATIPI. Residues 230–256 are Extracellular-facing; it reads TGTGINPARSLGAAIIYNKKHAWDDHW. The short motif at 235–237 is the NPA 2 element; it reads NPA. A helical transmembrane segment spans residues 257-277; the sequence is IFWVGPFIGAALAAIYHQIVI. Residues 278–286 lie on the Cytoplasmic side of the membrane; that stretch reads RAIPFKSRP.

Belongs to the MIP/aquaporin (TC 1.A.8) family. PIP (TC 1.A.8.11) subfamily. Expressed in leaves, roots, stems, flowers and fruits, with highest levels in roots.

It is found in the cell membrane. In terms of biological role, water channel required to facilitate the transport of water across cell membrane; mercury-insensitive. Promotes primary root elongation and root hair formation. Contributes to the tolerance to multiple abiotic stresses including salt (NaCl), cold and water deprivation, by modulating cytosolic K(+)/Na(+) ratio, maintaining osmotic balance, and reducing membrane injury (e.g. oxidative injury). Also regulates the expression of abscisic acid (ABA)-responsive genes during dehydration and salt stresses. The protein is Aquaporin PIP1-1 of Musa acuminata (Banana).